We begin with the raw amino-acid sequence, 517 residues long: Xaa-Pro dipeptidase (517 aa).

Positions 244, 255, 336, 381, and 420 each coordinate Mn(2+).

This sequence belongs to the peptidase M24B family. Bacterial-type prolidase subfamily. In terms of assembly, monomer. Mn(2+) is required as a cofactor.

The catalysed reaction is Xaa-L-Pro dipeptide + H2O = an L-alpha-amino acid + L-proline. It carries out the reaction diisopropyl fluorophosphate + H2O = diisopropyl phosphate + fluoride + 2 H(+). It catalyses the reaction An aryl dialkyl phosphate + H2O = dialkyl phosphate + an aryl alcohol.. In terms of biological role, splits dipeptides with a prolyl or hydroxyprolyl residue in the C-terminal position and a nonpolar amino acid at the N-terminal position. Also catalyzes the hydrolysis of toxic organophosphorus cholinesterase-inhibiting compounds including insecticide paraoxon and nerve gases such as diisopropylfluorophosphate (DFP), O-isopropyl methylphosphonofluoridate (sarin), O-pinacolyl methylphosphonofluoridate (soman), and O-cyclohexyl methylphosphonofluoridate. The sequence is that of Xaa-Pro dipeptidase (pepQ) from Alteromonas sp.